Here is a 94-residue protein sequence, read N- to C-terminus: Large ribosomal subunit protein bL28 (94 aa).

The segment at 1–21 is disordered; it reads MARRCEVTGRGTVSGNNVSHS. The segment covering 11–20 has biased composition (polar residues); the sequence is GTVSGNNVSH.

Belongs to the bacterial ribosomal protein bL28 family.

The protein is Large ribosomal subunit protein bL28 of Leptospira interrogans serogroup Icterohaemorrhagiae serovar copenhageni (strain Fiocruz L1-130).